We begin with the raw amino-acid sequence, 302 residues long: tRNA pseudouridine synthase B (302 aa).

D45 functions as the Nucleophile in the catalytic mechanism.

It belongs to the pseudouridine synthase TruB family. Type 1 subfamily.

It carries out the reaction uridine(55) in tRNA = pseudouridine(55) in tRNA. In terms of biological role, responsible for synthesis of pseudouridine from uracil-55 in the psi GC loop of transfer RNAs. The chain is tRNA pseudouridine synthase B from Francisella tularensis subsp. tularensis (strain FSC 198).